The sequence spans 425 residues: Serine hydroxymethyltransferase 2 (425 aa).

Residues L121 and 125-127 (GHL) contribute to the (6S)-5,6,7,8-tetrahydrofolate site. K230 carries the N6-(pyridoxal phosphate)lysine modification.

Belongs to the SHMT family. As to quaternary structure, homodimer. Pyridoxal 5'-phosphate serves as cofactor.

The protein localises to the cytoplasm. The catalysed reaction is (6R)-5,10-methylene-5,6,7,8-tetrahydrofolate + glycine + H2O = (6S)-5,6,7,8-tetrahydrofolate + L-serine. Its pathway is one-carbon metabolism; tetrahydrofolate interconversion. It functions in the pathway amino-acid biosynthesis; glycine biosynthesis; glycine from L-serine: step 1/1. Its function is as follows. Catalyzes the reversible interconversion of serine and glycine with tetrahydrofolate (THF) serving as the one-carbon carrier. This reaction serves as the major source of one-carbon groups required for the biosynthesis of purines, thymidylate, methionine, and other important biomolecules. Also exhibits THF-independent aldolase activity toward beta-hydroxyamino acids, producing glycine and aldehydes, via a retro-aldol mechanism. The sequence is that of Serine hydroxymethyltransferase 2 from Mycobacterium bovis (strain ATCC BAA-935 / AF2122/97).